Here is a 250-residue protein sequence, read N- to C-terminus: Small ribosomal subunit protein uS2 (250 aa).

It belongs to the universal ribosomal protein uS2 family.

The sequence is that of Small ribosomal subunit protein uS2 from Paraburkholderia phymatum (strain DSM 17167 / CIP 108236 / LMG 21445 / STM815) (Burkholderia phymatum).